The chain runs to 132 residues: Agouti-signaling protein (132 aa).

The first 22 residues, 1-22 (MDVTRLLLATLLVFLCFFTAYS), serve as a signal peptide directing secretion. N39 carries an N-linked (GlcNAc...) asparagine glycan. The tract at residues 61 to 87 (QISRKEAEKKRSSKKEASMKKVARPRT) is disordered. Basic and acidic residues predominate over residues 63-79 (SRKEAEKKRSSKKEASM). 5 disulfide bridges follow: C93-C108, C100-C114, C107-C125, C111-C132, and C116-C123. Residues 93-132 (CVATRDSCKPPAPACCDPCASCQCRFFRSACSCRVLSLNC) enclose the Agouti domain.

It is found in the secreted. Its function is as follows. Involved in the regulation of melanogenesis. The binding of ASP to MC1R precludes alpha-MSH initiated signaling and thus blocks production of cAMP, leading to a down-regulation of eumelanogenesis (brown/black pigment) and thus increasing synthesis of pheomelanin (yellow/red pigment). The sequence is that of Agouti-signaling protein (ASIP) from Macaca maura (Moor macaque).